The chain runs to 236 residues: T-cell surface glycoprotein CD8 alpha chain (236 aa).

The N-terminal stretch at 1–26 (MASRVICFLSLNLLLLDVITRLQVSG) is a signal peptide. Residues 27–130 (QLQLSPKKVD…ITSNSVMYFS (104 aa)) form the Ig-like V-type domain. Residues 27–189 (QLQLSPKKVD…MGLGFACDIY (163 aa)) are Extracellular-facing. Cysteine 47 and cysteine 119 are joined by a disulfide. Asparagine 63 carries N-linked (GlcNAc...) asparagine glycosylation. Threonine 144 carries an O-linked (GalNAc...) threonine; partial glycan. O-linked (GalNAc...) threonine glycosylation is found at threonine 148, threonine 152, threonine 158, and threonine 160. Residues 150 to 170 (APTPVPPPTGTPRPLRPEACR) are disordered. A helical transmembrane segment spans residues 190-210 (IWAPLAGICAVLLLSLVITLI). The S-palmitoyl cysteine moiety is linked to residue cysteine 211. Residues 211-236 (CCHRNRRRVCKCPRPLVKPRPSEKFV) lie on the Cytoplasmic side of the membrane.

In terms of assembly, forms disulfide-linked heterodimers with CD8B at the cell surface. Also forms homodimers in several cell types including NK-cells or peripheral blood T-lymphocytes. Interacts with the MHC class I HLA-A/B2M dimer. Interacts with LCK in a zinc-dependent manner. In terms of processing, palmitoylated, but association with CD8B seems to be more important for the enrichment of CD8A in lipid rafts. Post-translationally, O-glycosylated. Phosphorylated in cytotoxic T-lymphocytes (CTLs) following activation.

Its subcellular location is the cell membrane. In terms of biological role, integral membrane glycoprotein that plays an essential role in the immune response and serves multiple functions in responses against both external and internal offenses. In T-cells, functions primarily as a coreceptor for MHC class I molecule:peptide complex. The antigens presented by class I peptides are derived from cytosolic proteins while class II derived from extracellular proteins. Interacts simultaneously with the T-cell receptor (TCR) and the MHC class I proteins presented by antigen presenting cells (APCs). In turn, recruits the Src kinase LCK to the vicinity of the TCR-CD3 complex. LCK then initiates different intracellular signaling pathways by phosphorylating various substrates ultimately leading to lymphokine production, motility, adhesion and activation of cytotoxic T-lymphocytes (CTLs). This mechanism enables CTLs to recognize and eliminate infected cells and tumor cells. In NK-cells, the presence of CD8A homodimers at the cell surface provides a survival mechanism allowing conjugation and lysis of multiple target cells. CD8A homodimer molecules also promote the survival and differentiation of activated lymphocytes into memory CD8 T-cells. This Rattus norvegicus (Rat) protein is T-cell surface glycoprotein CD8 alpha chain (Cd8a).